Here is a 647-residue protein sequence, read N- to C-terminus: Knirps-related protein (647 aa).

The segment at residues 11-87 (NQTCKVCGEP…VGMSKSGSRY (77 aa)) is a DNA-binding region (nuclear receptor). NR C4-type zinc fingers lie at residues 14–34 (CKVCGEPAAGFHFGAFTCEGC) and 51–75 (CKNNGECIINKKNRTACKACRLKKC). Disordered stretches follow at residues 111 to 142 (MAAHHNSQQAGGGSSGGSGGGQGMPNGVKGMS), 196 to 274 (HKHP…LSPF), 340 to 383 (GAGQ…LLTN), and 402 to 600 (SQQQ…NSIL). Residues 120 to 134 (AGGGSSGGSGGGQGM) show a composition bias toward gly residues. Composition is skewed to low complexity over residues 200–223 (VVASPSVSSPDSHNSDSSVEVSSV) and 232–247 (GGKSNSGGSSSGADGS). The segment covering 248–260 (HSGGGGGGGGGVT) has biased composition (gly residues). Polar residues-rich tracts occupy residues 370 to 381 (SPSTHANNNHLL) and 420 to 432 (DYSISALVTPNSE). Composition is skewed to basic and acidic residues over residues 433-443 (SGRERVKSRQN) and 480-491 (QEERTPAGEDPR). The span at 502 to 519 (LSMKTTGSSLSSKSSSPE) shows a compositional bias: low complexity. Residues 520–541 (IEPETEISSDVEKNDTDDDDED) are compositionally biased toward acidic residues. Positions 542 to 556 (LKVTPEEEISVRETA) are enriched in basic and acidic residues. Residues 567–579 (TTETAKTSIENTH) are compositionally biased toward polar residues. Residues 580–599 (NNNNSISNNNNNNNNNNNSI) show a composition bias toward low complexity.

This sequence belongs to the nuclear hormone receptor family. NR0 subfamily.

The protein resides in the nucleus. The protein is Knirps-related protein (knrl) of Drosophila melanogaster (Fruit fly).